The sequence spans 462 residues: tRNA modification GTPase MnmE (462 aa).

(6S)-5-formyl-5,6,7,8-tetrahydrofolate-binding residues include Arg-22, Glu-87, and Arg-126. In terms of domain architecture, TrmE-type G spans 220 to 382 (GLKVAIVGRP…LARKVQEIVL (163 aa)). Position 230 (Asn-230) interacts with K(+). Residues 230-235 (NVGKSS), 249-255 (SNIPGTT), and 274-277 (DTAG) contribute to the GTP site. Ser-234 lines the Mg(2+) pocket. Residues Ser-249, Ile-251, and Thr-254 each contribute to the K(+) site. Thr-255 provides a ligand contact to Mg(2+). Residue Lys-462 participates in (6S)-5-formyl-5,6,7,8-tetrahydrofolate binding.

Belongs to the TRAFAC class TrmE-Era-EngA-EngB-Septin-like GTPase superfamily. TrmE GTPase family. As to quaternary structure, homodimer. Heterotetramer of two MnmE and two MnmG subunits. The cofactor is K(+).

Its subcellular location is the cytoplasm. Functionally, exhibits a very high intrinsic GTPase hydrolysis rate. Involved in the addition of a carboxymethylaminomethyl (cmnm) group at the wobble position (U34) of certain tRNAs, forming tRNA-cmnm(5)s(2)U34. This is tRNA modification GTPase MnmE from Moorella thermoacetica (strain ATCC 39073 / JCM 9320).